The chain runs to 243 residues: 4-phosphopantoate--beta-alanine ligase (243 aa).

ATP is bound by residues Arg15, Arg37, 176–178 (DLN), and 182–183 (RT).

This sequence belongs to the archaeal phosphopantothenate synthetase family. As to quaternary structure, homodimer.

The enzyme catalyses (R)-4-phosphopantoate + beta-alanine + ATP = (R)-4'-phosphopantothenate + AMP + diphosphate + H(+). Its pathway is cofactor biosynthesis; coenzyme A biosynthesis. Its function is as follows. Catalyzes the condensation of (R)-4-phosphopantoate and beta-alanine to 4'-phosphopantothenate in the CoA biosynthesis pathway. This chain is 4-phosphopantoate--beta-alanine ligase, found in Methanospirillum hungatei JF-1 (strain ATCC 27890 / DSM 864 / NBRC 100397 / JF-1).